The primary structure comprises 464 residues: Keratin, type I cytoskeletal 28 (464 aa).

The tract at residues 1–85 (MSLRFSSGSR…GSEGGLFSGN (85 aa)) is head. The segment at 86–121 (EKVTMQNLNDRLASYLDNVRALEEANAELERKIKSW) is coil 1A. The 316-residue stretch at 86–401 (EKVTMQNLND…RLIDGDRNSC (316 aa)) folds into the IF rod domain. Positions 122–143 (YEKHGPGSCHGLDHDYSRYHLT) are linker 1. The coil 1B stretch occupies residues 144–235 (IEDLKNKIIS…KNHEEEVKAL (92 aa)). The tract at residues 236-258 (QCVAGGNVNVEMNAAPGVDLTLL) is linker 12. The tract at residues 259-397 (LNNMRAEYED…ETYCRLIDGD (139 aa)) is coil 2. The segment at 398-464 (RNSCSKSKGF…NGKTKQRVPF (67 aa)) is tail. The segment covering 402-417 (SKSKGFGSGSPGNSSK) has biased composition (low complexity). 2 disordered regions span residues 402–422 (SKSKGFGSGSPGNSSKDLSRT) and 440–464 (SSRVQSIEEKTSKMTNGKTKQRVPF).

This sequence belongs to the intermediate filament family. Heterotetramer of two type I and two type II keratins.

Its subcellular location is the cytoplasm. Functionally, essential for the proper assembly of types I and II keratin protein complexes and the formation of keratin intermediate filaments in the inner root sheath (irs). The chain is Keratin, type I cytoskeletal 28 from Bos taurus (Bovine).